The chain runs to 212 residues: Thymidylate kinase (212 aa).

11–18 (GPEGAGKT) serves as a coordination point for ATP.

Belongs to the thymidylate kinase family.

The catalysed reaction is dTMP + ATP = dTDP + ADP. In terms of biological role, phosphorylation of dTMP to form dTDP in both de novo and salvage pathways of dTTP synthesis. The sequence is that of Thymidylate kinase from Streptococcus pneumoniae serotype 19F (strain G54).